Here is a 1142-residue protein sequence, read N- to C-terminus: E3 ubiquitin-protein ligase TRIM33 (1142 aa).

Over residues 1–18 (MAENKGGGEAESGGGGSG) the composition is skewed to gly residues. Residues 1 to 132 (MAENKGGGEA…PGSSSGPPLG (132 aa)) are disordered. The necessary for E3 ubiquitin-protein ligase activity and repression of SMAD4 signaling and transcriptional repression stretch occupies residues 1–163 (MAENKGGGEA…AEPKLLPCLH (163 aa)). Residues 19 to 42 (SAPVTAGAAGPTAQEAEPPLAAVL) are compositionally biased toward low complexity. Positions 52 to 64 (RAGAEGGAAGPDD) are enriched in gly residues. A compositionally biased stretch (low complexity) spans 65 to 99 (GGVAAASSSSAPAASVPAASVGSAVPGGAASTPAP). Over residues 100 to 122 (AAAPAPAPAPAPAPAPAPAPAPA) the composition is skewed to pro residues. The segment at 141-201 (CAVCQQSLQS…VGVIRCPVCR (61 aa)) adopts an RING-type zinc-finger fold. 2 B box-type zinc fingers span residues 228-275 (KSEQ…IRKK) and 287-328 (QRPV…YQFL). 8 residues coordinate Zn(2+): Cys233, Cys236, Cys257, His261, Cys292, His295, Cys315, and His320. The interval 315 to 417 (CQLLEHKEHR…QMKLLQQQND (103 aa)) is necessary for oligomerization. Residues 315-417 (CQLLEHKEHR…QMKLLQQQND (103 aa)) adopt a coiled-coil conformation. Glycyl lysine isopeptide (Lys-Gly) (interchain with G-Cter in SUMO2) cross-links involve residues Lys345, Lys350, Lys497, and Lys520. Arg531 is modified (asymmetric dimethylarginine; alternate). The residue at position 531 (Arg531) is an Omega-N-methylarginine; alternate. Residue Lys543 forms a Glycyl lysine isopeptide (Lys-Gly) (interchain with G-Cter in SUMO2) linkage. Residue Arg551 is modified to Omega-N-methylarginine. Arg593 bears the Asymmetric dimethylarginine mark. Arg607 is modified (asymmetric dimethylarginine; alternate). Arg607 carries the post-translational modification Omega-N-methylarginine; alternate. An asymmetric dimethylarginine mark is found at Arg614 and Arg620. Disordered stretches follow at residues 657-676 (PTSP…TSPS), 688-707 (NPEN…EDAG), and 718-834 (YISG…PPLS). The span at 738–774 (PSALSPGSSGLSNSHTPVRPPSTSSTGSRGSCGSSGR) shows a compositional bias: low complexity. Composition is skewed to basic and acidic residues over residues 775–794 (TAEK…KQEP) and 808–817 (KQEKTEDGRR). An N6-acetyllysine; alternate mark is found at Lys778 and Lys784. Residues Lys778 and Lys784 each participate in a glycyl lysine isopeptide (Lys-Gly) (interchain with G-Cter in SUMO2); alternate cross-link. Lys789 is covalently cross-linked (Glycyl lysine isopeptide (Lys-Gly) (interchain with G-Cter in SUMO2)). Glycyl lysine isopeptide (Lys-Gly) (interchain with G-Cter in SUMO2); alternate cross-links involve residues Lys791 and Lys808. Residues Lys791 and Lys808 each participate in a glycyl lysine isopeptide (Lys-Gly) (interchain with G-Cter in SUMO1); alternate cross-link. Lys808 bears the N6-acetyllysine; alternate mark. Lys811 participates in a covalent cross-link: Glycyl lysine isopeptide (Lys-Gly) (interchain with G-Cter in SUMO2). A Phosphoserine modification is found at Ser818. Residues 822-834 (LSSPESSLTPPLS) are compositionally biased toward low complexity. Position 830 is a phosphothreonine (Thr830). Lys876 is covalently cross-linked (Glycyl lysine isopeptide (Lys-Gly) (interchain with G-Cter in SUMO2)). Ser877 carries the phosphoserine modification. The PHD-type zinc-finger motif lies at 902–949 (EDWCAVCQNGGDLLCCEKCPKVFHLTCHVPTLLSFPSGDWICTFCRDI). At Lys966 the chain carries N6-acetyllysine. Lys968 carries the post-translational modification N6-acetyllysine; alternate. Lys968 is covalently cross-linked (Glycyl lysine isopeptide (Lys-Gly) (interchain with G-Cter in SUMO2); alternate). Residues 972–1095 (GLSPVDQRKC…LYFEDKLSEI (124 aa)) enclose the Bromo domain. Residues Lys1022 and Lys1058 each participate in a glycyl lysine isopeptide (Lys-Gly) (interchain with G-Cter in SUMO2) cross-link. Thr1066 carries the phosphothreonine modification. Lys1072 participates in a covalent cross-link: Glycyl lysine isopeptide (Lys-Gly) (interchain with G-Cter in SUMO2). Residues 1103–1142 (PLPEFEQDEDDGEVTEDSDEDFIQPRRKRLKSDERPVHIK) form a disordered region. The segment covering 1107–1124 (FEQDEDDGEVTEDSDEDF) has biased composition (acidic residues). Thr1117 is modified (phosphothreonine). Residue Ser1120 is modified to Phosphoserine. Lys1133 participates in a covalent cross-link: Glycyl lysine isopeptide (Lys-Gly) (interchain with G-Cter in SUMO2). Over residues 1133-1142 (KSDERPVHIK) the composition is skewed to basic and acidic residues. The residue at position 1134 (Ser1134) is a Phosphoserine.

The protein belongs to the TRIM/RBCC family. As to quaternary structure, homooligomer and heterooligomer with TRIM24 and TRIM28 family members. Interacts with SMAD4 in unstimulated cells. Found in a complex with SMAD2 and SMAD3 upon addition of TGF-beta. Interacts with SMAD2 and SMAD3. Interacts with SMAD4 under basal and induced conditions and, upon TGF-beta signaling, with activated SMAD2. Forms a ternary complex with SMAD4 and SMAD2 upon TGF-beta signaling. In terms of processing, sumoylated with SUMO1. As to expression, ubiquitous with high level in testis.

The protein resides in the nucleus. It carries out the reaction S-ubiquitinyl-[E2 ubiquitin-conjugating enzyme]-L-cysteine + [acceptor protein]-L-lysine = [E2 ubiquitin-conjugating enzyme]-L-cysteine + N(6)-ubiquitinyl-[acceptor protein]-L-lysine.. The protein operates within protein modification; protein ubiquitination. Its function is as follows. Acts as an E3 ubiquitin-protein ligase. Promotes SMAD4 ubiquitination, nuclear exclusion and degradation via the ubiquitin proteasome pathway. May act as a transcriptional repressor. Inhibits the transcriptional response to TGF-beta/BMP signaling cascade. Plays a role in the control of cell proliferation. Its association with SMAD2 and SMAD3 stimulates erythroid differentiation of hematopoietic stem/progenitor. Monoubiquitinates SMAD4 and acts as an inhibitor of SMAD4-dependent TGF-beta/BMP signaling cascade (Monoubiquitination of SMAD4 hampers its ability to form a stable complex with activated SMAD2/3 resulting in inhibition of TGF-beta/BMP signaling cascade). The polypeptide is E3 ubiquitin-protein ligase TRIM33 (Trim33) (Mus musculus (Mouse)).